Here is a 144-residue protein sequence, read N- to C-terminus: Large ribosomal subunit protein uL13 (144 aa).

The protein belongs to the universal ribosomal protein uL13 family. Part of the 50S ribosomal subunit.

Its function is as follows. This protein is one of the early assembly proteins of the 50S ribosomal subunit, although it is not seen to bind rRNA by itself. It is important during the early stages of 50S assembly. This Heliobacterium modesticaldum (strain ATCC 51547 / Ice1) protein is Large ribosomal subunit protein uL13.